We begin with the raw amino-acid sequence, 188 residues long: MGVDIRHNKDRKVRRKEPKSQDIYLRLLVKLYRFLARRTNSTFNQVVLKRLFMSRTNRPPLSLSRMIRKMKLPGRENKTAVVVGTITDDVRVQEVPKLKVCALRVTSRARSRILRAGGKILTFDQLALDSPKGCGTVLLSGPRKGREVYRHFGKAPGTPHSHTKPYVRSKGRKFERARGRRASRGYKN.

Residue K119 forms a Glycyl lysine isopeptide (Lys-Gly) (interchain with G-Cter in SUMO2) linkage. The residue at position 130 (S130) is a Phosphoserine. Residues 151 to 188 form a disordered region; it reads HFGKAPGTPHSHTKPYVRSKGRKFERARGRRASRGYKN. Residue T158 is modified to Phosphothreonine. 2 stretches are compositionally biased toward basic residues: residues 161–171 and 178–188; these read SHTKPYVRSKG and RGRRASRGYKN. Residue K164 forms a Glycyl lysine isopeptide (Lys-Gly) (interchain with G-Cter in SUMO2) linkage.

It belongs to the eukaryotic ribosomal protein eL18 family. As to quaternary structure, component of the large ribosomal subunit.

Its subcellular location is the cytoplasm. The protein resides in the cytosol. It is found in the rough endoplasmic reticulum. Functionally, component of the large ribosomal subunit. The ribosome is a large ribonucleoprotein complex responsible for the synthesis of proteins in the cell. The protein is Large ribosomal subunit protein eL18 (RPL18) of Homo sapiens (Human).